Here is a 538-residue protein sequence, read N- to C-terminus: NADH-quinone oxidoreductase subunit N (538 aa).

14 helical membrane passes run 12 to 32 (IAYGALSPMLIMFGVAVVSVL), 47 to 67 (LALATVGILGAFVAVVALSGS), 81 to 101 (PTLYLQGLILVASGLALVVMA), 144 to 164 (GITQTEIFPLTLFAIAGMMLF), 170 to 190 (LLTMFVALEVFSLPLYVMCAL), 205 to 225 (YFLLGAFSSAFFLFGSAFVYG), 248 to 268 (FLLLGVAMLSVGLLFKVGAVP), 294 to 314 (IAAFGALLRVLYVALPGITTD), 317 to 337 (PVLWGVAIATMLIGSIGAVTQ), 343 to 363 (MLAYSAVAHTGFLLTGVAAAN), 371 to 391 (LFYLAAYGFSTVGAFIIAGLV), 423 to 443 (APVLGIVFALFLLAFAGIPLT), 472 to 492 (SAIAAYFYVRVIVVMFFADPV), and 502 to 522 (GPAVTVSIAVSALITVLLGVA).

Belongs to the complex I subunit 2 family. In terms of assembly, NDH-1 is composed of 14 different subunits. Subunits NuoA, H, J, K, L, M, N constitute the membrane sector of the complex.

Its subcellular location is the cell membrane. The catalysed reaction is a quinone + NADH + 5 H(+)(in) = a quinol + NAD(+) + 4 H(+)(out). Its function is as follows. NDH-1 shuttles electrons from NADH, via FMN and iron-sulfur (Fe-S) centers, to quinones in the respiratory chain. The immediate electron acceptor for the enzyme in this species is believed to be a menaquinone. Couples the redox reaction to proton translocation (for every two electrons transferred, four hydrogen ions are translocated across the cytoplasmic membrane), and thus conserves the redox energy in a proton gradient. This is NADH-quinone oxidoreductase subunit N from Mycobacteroides abscessus (strain ATCC 19977 / DSM 44196 / CCUG 20993 / CIP 104536 / JCM 13569 / NCTC 13031 / TMC 1543 / L948) (Mycobacterium abscessus).